The primary structure comprises 251 residues: Triosephosphate isomerase (251 aa).

9–11 provides a ligand contact to substrate; it reads NWK. The active-site Electrophile is the histidine 96. The active-site Proton acceptor is glutamate 166. Substrate is bound by residues glycine 172, serine 212, and 233–234; that span reads GG.

This sequence belongs to the triosephosphate isomerase family. Homodimer.

Its subcellular location is the cytoplasm. It catalyses the reaction D-glyceraldehyde 3-phosphate = dihydroxyacetone phosphate. The protein operates within carbohydrate biosynthesis; gluconeogenesis. Its pathway is carbohydrate degradation; glycolysis; D-glyceraldehyde 3-phosphate from glycerone phosphate: step 1/1. In terms of biological role, involved in the gluconeogenesis. Catalyzes stereospecifically the conversion of dihydroxyacetone phosphate (DHAP) to D-glyceraldehyde-3-phosphate (G3P). This Pelodictyon phaeoclathratiforme (strain DSM 5477 / BU-1) protein is Triosephosphate isomerase.